Reading from the N-terminus, the 729-residue chain is MSIEAVWGTLQDGLNLLYRREHMSKKYYMMLYDAVYNICTTTTLANSNNNSPEFASEFLYKQLENYIRTYVIAIRDRISACSGDELLGKCTIEWDNFKFSTRICNCIFQYLNRNFVSKKVEDKNGEIVEIYKLALDIWKAEFFDNFKVKTIDAILELILLERCGSTINSTHISSVVECLTELDIYKVSFEPQFLDATKLFYKQEVLNSKETVIEYMITVENRLFQEEYRSRRYLGPSTNDLLIDSCESILISDRLKFLHSEFERLLEARKDEHLTRMYSLCRRVTHGLEDLRVYLEKRILKEGHETLQRLAKDSGLKTTPKEYITKLLEVHEIYFNLINKAFDRNALFMQSLDKASKDFIEANAVTMLAPEKHRSTRSADYLARYCDQLLKKNSKVQDETALDKALTVLKYISEKDVFQLYYQNWFSERIINNSSASDDAEEKFITNLTATEGLEYTRNLVKMVEDAKISKDLTTEFKDIKTEKSIDFNVILQTTGAWPSLDQIKIILPRELSTILKEFDTFYNASHNGRRLNWAYSQCRGEVNSKAFEKKYVFIVTASQLCTLYLFNEQDSFTIEQISKAIEMTAKSTSAIVGSLNPVIDPVLVVDKGNEKDGYPPDAVVSLNTKYANKKVRVDLTTAIKKATADRETDAVQNTVESDRKYEIKACIVRIMKTRKSLTHTLLINEIISQLKSRFTPNVQMIKICIEILIEQLYIRRSENEHNVYEYLA.

The Cullin neddylation domain maps to 659–720; the sequence is DRKYEIKACI…EQLYIRRSEN (62 aa). Lys673 is covalently cross-linked (Glycyl lysine isopeptide (Lys-Gly) (interchain with G-Cter in NEDD8)).

Belongs to the cullin family. Probably interacts with skr-3. In terms of processing, neddylated; which enhances the ubiquitination activity of SCF-like complex.

Probable core component of cullin-based SCF-like E3 ubiquitin-protein ligase complexes which mediate the ubiquitination and subsequent proteasomal degradation of target proteins. The protein is Cullin-6 (cul-6) of Caenorhabditis elegans.